The primary structure comprises 145 residues: 3-dehydroquinate dehydratase (145 aa).

Catalysis depends on Y22, which acts as the Proton acceptor. Substrate-binding residues include N74, H80, and D87. H100 (proton donor) is an active-site residue. Substrate-binding positions include 101–102 (IS) and R111.

Belongs to the type-II 3-dehydroquinase family. In terms of assembly, homododecamer.

The enzyme catalyses 3-dehydroquinate = 3-dehydroshikimate + H2O. It functions in the pathway metabolic intermediate biosynthesis; chorismate biosynthesis; chorismate from D-erythrose 4-phosphate and phosphoenolpyruvate: step 3/7. Functionally, catalyzes a trans-dehydration via an enolate intermediate. This chain is 3-dehydroquinate dehydratase, found in Lachnoclostridium phytofermentans (strain ATCC 700394 / DSM 18823 / ISDg) (Clostridium phytofermentans).